The following is a 268-amino-acid chain: Small ribosomal subunit protein uS3 (268 aa).

The 69-residue stretch at 38–106 (IRKLLATGME…QVQLNILEVK (69 aa)) folds into the KH type-2 domain. The interval 217–268 (NTAAPAGDRPRRERPSRPRRSGATGTTATSTEAGRAATATADAPATEQNQEG) is disordered. The segment covering 237-268 (SGATGTTATSTEAGRAATATADAPATEQNQEG) has biased composition (low complexity).

The protein belongs to the universal ribosomal protein uS3 family. In terms of assembly, part of the 30S ribosomal subunit. Forms a tight complex with proteins S10 and S14.

Binds the lower part of the 30S subunit head. Binds mRNA in the 70S ribosome, positioning it for translation. The chain is Small ribosomal subunit protein uS3 from Rhodococcus erythropolis (strain PR4 / NBRC 100887).